The sequence spans 490 residues: Ketol-acid reductoisomerase (NADP(+)) (490 aa).

Residues 17–208 (LAQCEFMNAD…GGHRAGVLKS (192 aa)) form the KARI N-terminal Rossmann domain. NADP(+) is bound by residues 45 to 48 (CGAQ), R68, R76, S78, and 108 to 110 (DKQ). H132 is an active-site residue. G158 contributes to the NADP(+) binding site. 2 consecutive KARI C-terminal knotted domains span residues 209-353 (SFIA…AEQE) and 355-486 (FDNG…MSAM). Mg(2+) is bound by residues D217, E221, E389, and E393. S414 contributes to the substrate binding site.

It belongs to the ketol-acid reductoisomerase family. Mg(2+) is required as a cofactor.

It carries out the reaction (2R)-2,3-dihydroxy-3-methylbutanoate + NADP(+) = (2S)-2-acetolactate + NADPH + H(+). The catalysed reaction is (2R,3R)-2,3-dihydroxy-3-methylpentanoate + NADP(+) = (S)-2-ethyl-2-hydroxy-3-oxobutanoate + NADPH + H(+). It functions in the pathway amino-acid biosynthesis; L-isoleucine biosynthesis; L-isoleucine from 2-oxobutanoate: step 2/4. It participates in amino-acid biosynthesis; L-valine biosynthesis; L-valine from pyruvate: step 2/4. Involved in the biosynthesis of branched-chain amino acids (BCAA). Catalyzes an alkyl-migration followed by a ketol-acid reduction of (S)-2-acetolactate (S2AL) to yield (R)-2,3-dihydroxy-isovalerate. In the isomerase reaction, S2AL is rearranged via a Mg-dependent methyl migration to produce 3-hydroxy-3-methyl-2-ketobutyrate (HMKB). In the reductase reaction, this 2-ketoacid undergoes a metal-dependent reduction by NADPH to yield (R)-2,3-dihydroxy-isovalerate. The chain is Ketol-acid reductoisomerase (NADP(+)) from Pseudoalteromonas translucida (strain TAC 125).